A 340-amino-acid polypeptide reads, in one-letter code: Glycerol-3-phosphate dehydrogenase [NAD(P)+] (340 aa).

Residues serine 14, phenylalanine 15, arginine 35, and lysine 108 each coordinate NADPH. Residues lysine 108 and glycine 136 each contribute to the sn-glycerol 3-phosphate site. Alanine 140 provides a ligand contact to NADPH. 5 residues coordinate sn-glycerol 3-phosphate: lysine 191, aspartate 244, serine 254, arginine 255, and asparagine 256. Catalysis depends on lysine 191, which acts as the Proton acceptor. Residue arginine 255 coordinates NADPH. Positions 279 and 281 each coordinate NADPH.

Belongs to the NAD-dependent glycerol-3-phosphate dehydrogenase family.

It is found in the cytoplasm. It carries out the reaction sn-glycerol 3-phosphate + NAD(+) = dihydroxyacetone phosphate + NADH + H(+). The enzyme catalyses sn-glycerol 3-phosphate + NADP(+) = dihydroxyacetone phosphate + NADPH + H(+). It functions in the pathway membrane lipid metabolism; glycerophospholipid metabolism. Catalyzes the reduction of the glycolytic intermediate dihydroxyacetone phosphate (DHAP) to sn-glycerol 3-phosphate (G3P), the key precursor for phospholipid synthesis. In Azotobacter vinelandii (strain DJ / ATCC BAA-1303), this protein is Glycerol-3-phosphate dehydrogenase [NAD(P)+].